The chain runs to 285 residues: MGLAAPRKKIKISHDPNNTNWSRSTSGFGHKILSSQGWTPGSFLGARNAAHAEMFTAASASHIKVVLKDDTLGLGARPKRDPLNEPTGLDAFKGLLGRLNGKSDADLQVEQQKRDNVKLARYAATKWQAVTFISGGLLAQEKTTPIVTEEPQGIHKDKQEDKLSATVPGPDSDGVEGSDNIGGQSDQSIKKKKSKSKNHREKKDRKRKHTEEPESTDSGNTNKRSTEKKSKATRDDEESSSTTSKGLSRERRPMGRHVFRGRHIAQKKAALMDEKSLNEIFMVKS.

Over residues 1-11 (MGLAAPRKKIK) the composition is skewed to basic residues. The disordered stretch occupies residues 1-23 (MGLAAPRKKIKISHDPNNTNWSR). Positions 25–79 (TSGFGHKILSSQGWTPGSFLGARNAAHAEMFTAASASHIKVVLKDDTLGLGARPK) constitute a G-patch domain. Residues 144–263 (TPIVTEEPQG…MGRHVFRGRH (120 aa)) are disordered. A compositionally biased stretch (basic and acidic residues) spans 152–163 (QGIHKDKQEDKL). Positions 190-208 (KKKKSKSKNHREKKDRKRK) are enriched in basic residues. The segment covering 224–234 (RSTEKKSKATR) has biased composition (basic and acidic residues). A compositionally biased stretch (basic residues) spans 254–263 (MGRHVFRGRH).

It belongs to the PINX1 family.

The protein resides in the nucleus. Its subcellular location is the nucleolus. In terms of biological role, involved in rRNA-processing at A0, A1 and A2 sites and negatively regulates telomerase. This is Protein pxr1 (pxr1) from Aspergillus niger (strain ATCC MYA-4892 / CBS 513.88 / FGSC A1513).